The chain runs to 280 residues: P32 adhesin (280 aa).

The next 2 membrane-spanning stretches (helical) occupy residues 13–37 and 68–92; these read FIVL…ALVV and WFIP…AIGL. Residues 114–128 are compositionally biased toward polar residues; the sequence is EQLQRISDQQEQQTV. 2 disordered regions span residues 114-149 and 163-280; these read EQLQ…QPLQ and FNPN…GLKP. Low complexity-rich tracts occupy residues 132-149 and 168-188; these read PQQS…QPLQ and QQRP…NFNP. 13 repeat units span residues 163 to 168, 170 to 174, 186 to 190, 191 to 195, 196 to 200, 199 to 204, 206 to 210, 222 to 226, 227 to 231, 232 to 236, 249 to 254, 256 to 260, and 259 to 264. A 6 X 5 AA repeats of [FM]-N-P-N-M-Q region spans residues 163-264; it reads FNPNMQQRPG…QRPGFNPNMQ (102 aa). The tract at residues 170–260 is 5 X 5 AA repeats of R-P-G-F-N; sequence RPGFNQPNQQ…PNMQQRPGFN (91 aa). The segment at 186-226 is 2 X 5 AA repeats of F-N-P-R-M; that stretch reads FNPRMNPNMQRPGFNPNMQQRPGFNQPNQQFQPHNNFNPRM. Low complexity predominate over residues 204-224; that stretch reads QQRPGFNQPNQQFQPHNNFNP. Over residues 235–257 the composition is skewed to low complexity; that stretch reads FNQPHPNQFAQPNNFNPNMQQRP. The segment covering 261-271 has biased composition (polar residues); sequence PNMQQRPNPSQ.

It is found in the cell projection. Its subcellular location is the attachment organelle membrane. In terms of biological role, adhesin necessary for successful cytadherence and virulence. In Mycoplasma genitalium (strain ATCC 33530 / DSM 19775 / NCTC 10195 / G37) (Mycoplasmoides genitalium), this protein is P32 adhesin.